The chain runs to 264 residues: Teichoic acids export ATP-binding protein TagH (264 aa).

Positions 24-243 (IKDALIPKNK…YEAFLKTFKK (220 aa)) constitute an ABC transporter domain. 57–64 (GINGSGKS) contributes to the ATP binding site.

This sequence belongs to the ABC transporter superfamily. Teichoic acids exporter (TC 3.A.1.104.1) family. The complex is composed of two ATP-binding proteins (TagH) and two transmembrane proteins (TagG).

It is found in the cell membrane. It catalyses the reaction ATP + H2O + teichoic acidSide 1 = ADP + phosphate + teichoic acidSide 2.. In terms of biological role, part of the ABC transporter complex TagGH involved in teichoic acids export. Responsible for energy coupling to the transport system. This chain is Teichoic acids export ATP-binding protein TagH, found in Staphylococcus epidermidis (strain ATCC 35984 / DSM 28319 / BCRC 17069 / CCUG 31568 / BM 3577 / RP62A).